The chain runs to 761 residues: Complement factor B (761 aa).

An N-terminal signal peptide occupies residues 1–22 (MESPQLCLVLLVLGFSSGGVSA). Sushi domains lie at 32-97 (VSCS…ECRA), 98-157 (IRCP…ICDD), and 160-217 (GYCP…SCQD). Cystine bridges form between cysteine 34-cysteine 73, cysteine 59-cysteine 95, cysteine 100-cysteine 142, cysteine 128-cysteine 155, cysteine 162-cysteine 202, and cysteine 188-cysteine 215. Residues asparagine 119 and asparagine 139 are each glycosylated (N-linked (GlcNAc...) asparagine). A VWFA domain is found at 267–466 (NIYLVLDGSD…DLENVFYQMI (200 aa)). Mg(2+)-binding residues include serine 275 and serine 277. N-linked (GlcNAc...) asparagine glycosylation is present at asparagine 282. Residue threonine 350 coordinates Mg(2+). An N-linked (GlcNAc...) asparagine glycan is attached at asparagine 375. Positions 474–754 (LCGMVWEHKK…VLPWLKDKLK (281 aa)) constitute a Peptidase S1 domain. 5 cysteine pairs are disulfide-bonded: cysteine 475/cysteine 593, cysteine 508/cysteine 524, cysteine 596/cysteine 612, cysteine 653/cysteine 679, and cysteine 692/cysteine 722. Active-site charge relay system residues include histidine 523 and aspartate 573. Serine 696 serves as the catalytic Charge relay system.

Belongs to the peptidase S1 family. Monomer. Interacts with complement C3b; this interaction is dependent on the presence of Mg(2+). In terms of assembly, catalytic component of the C3 convertase of the alternative complement pathway, also named C3bBb, composed of complement factor B Bb and complement C3b. Catalytic component of the C5 convertase of the alternative complement pathway, also named C3bBb3b, composed of complement factor B Bb and additional molecules of complement C3b. Interacts to CFP; this interaction contributes to the stabilization of the active C3-convertase enzyme complex. Mg(2+) is required as a cofactor. The cofactor is Mn(2+). Cleaved by CFD following activation of the alternative complement system, generating Ba and Bb chains. Cleavage and activation takes place when CFB is already associated with complement C3b.

The protein localises to the secreted. It is found in the cell surface. The catalysed reaction is Cleavage of Arg-|-Ser bond in complement component C3 alpha-chain to yield C3a and C3b, and Arg-|-Xaa bond in complement component C5 alpha-chain to yield C5a and C5b.. In terms of biological role, precursor of the catalytic component of the C3 and C5 convertase complexes of the alternative pathway of the complement system, a cascade of proteins that leads to phagocytosis and breakdown of pathogens and signaling that strengthens the adaptive immune system. The alternative complement pathway acts as an amplification loop that enhances other complement pathways (classical, lectin and GZMK) by promoting formation of additional C3 and C5 convertases. CFB is cleaved and activated by CFD to generate Ba and Bb chains; Bb chain constituting the catalytic component of the C3 and C5 convertases. Serine protease component of the complement C3 and C5 convertase complexes of the alternative complement pathway. Following cleavage and activation by factor D (CFD), forms the C3 convertase together with complement C3b. As part of the C3 convertase, cleaves and activates C3 into C3a anaphylatoxin and C3b opsonin, the next components of the complement pathways. When an additional complement C3b molecule binds to the C3 convertase, forms the C5 convertase, which cleaves and activates C5 into C5a anaphylatoxin and C5b component of the membrane attack complex. Functionally, involved in proliferation and differentiation of preactivated B-lymphocytes, rapid spreading of peripheral blood monocytes, stimulation of lymphocyte blastogenesis and lysis of erythrocytes. This Mus musculus (Mouse) protein is Complement factor B (Cfb).